Here is a 691-residue protein sequence, read N- to C-terminus: DNA ligase (691 aa).

NAD(+) is bound by residues 56-60 (DRAYD), 104-105 (SI), and E139. K141 functions as the N6-AMP-lysine intermediate in the catalytic mechanism. NAD(+) contacts are provided by R162, E198, K314, and K338. Zn(2+) contacts are provided by C429, C432, C445, and C451. In terms of domain architecture, BRCT spans 607-691 (TAGDALSGQT…SLLESHGIEI (85 aa)).

The protein belongs to the NAD-dependent DNA ligase family. LigA subfamily. Mg(2+) serves as cofactor. It depends on Mn(2+) as a cofactor.

The catalysed reaction is NAD(+) + (deoxyribonucleotide)n-3'-hydroxyl + 5'-phospho-(deoxyribonucleotide)m = (deoxyribonucleotide)n+m + AMP + beta-nicotinamide D-nucleotide.. DNA ligase that catalyzes the formation of phosphodiester linkages between 5'-phosphoryl and 3'-hydroxyl groups in double-stranded DNA using NAD as a coenzyme and as the energy source for the reaction. It is essential for DNA replication and repair of damaged DNA. This Natronomonas pharaonis (strain ATCC 35678 / DSM 2160 / CIP 103997 / JCM 8858 / NBRC 14720 / NCIMB 2260 / Gabara) (Halobacterium pharaonis) protein is DNA ligase.